We begin with the raw amino-acid sequence, 581 residues long: Arginine--tRNA ligase (581 aa).

The 'HIGH' region signature appears at 126–136 (PNLAKEMHVGH).

It belongs to the class-I aminoacyl-tRNA synthetase family. Monomer.

The protein localises to the cytoplasm. It carries out the reaction tRNA(Arg) + L-arginine + ATP = L-arginyl-tRNA(Arg) + AMP + diphosphate. In Shewanella sp. (strain MR-7), this protein is Arginine--tRNA ligase.